A 164-amino-acid chain; its full sequence is Putative ankyrin repeat protein RBE_0585 (164 aa).

ANK repeat units lie at residues Asn42–Leu107 and Asp126–Tyr149.

The polypeptide is Putative ankyrin repeat protein RBE_0585 (Rickettsia bellii (strain RML369-C)).